Consider the following 1416-residue polypeptide: Isonitrile lipopeptide synthase (1416 aa).

The stretch at Leu-188–Gln-215 forms a coiled coil. In terms of domain architecture, Carrier spans Arg-965–Pro-1028. Ser-988 carries the O-(pantetheine 4'-phosphoryl)serine modification.

This sequence belongs to the ATP-dependent AMP-binding enzyme family. Requires pantetheine 4'-phosphate as cofactor.

The catalysed reaction is 2 a (3R)-3-isocyanyl-fatty acyl-[ACP] + L-lysine + ATP + 2 NADPH = an isonitrile lipopeptide + 2 holo-[ACP] + AMP + diphosphate + 2 NADP(+). In terms of biological role, nonribosomal peptide synthetase (NRPS) involved in the biosynthesis of a unique class of isonitrile lipopeptides (INLPs) that seem to play a role in metal acquisition in M.marinum. Catalyzes the final step in the pathway, i.e. the condensation of a (3R)-3-isocyanyl-fatty acyl-[ACP] to both amino groups of a lysine, producing isonitrile lipopeptides. This chain is Isonitrile lipopeptide synthase, found in Mycobacterium marinum (strain ATCC BAA-535 / M).